A 135-amino-acid polypeptide reads, in one-letter code: Protein PsiE homolog (135 aa).

Helical transmembrane passes span 14–34 (LQTI…IFLV), 54–74 (YQLI…ALIV), 82–102 (HFPL…LIIV), and 107–127 (PSDT…LYLA).

It belongs to the PsiE family.

It localises to the cell inner membrane. In Pectobacterium carotovorum subsp. carotovorum (strain PC1), this protein is Protein PsiE homolog.